Reading from the N-terminus, the 558-residue chain is 2-isopropylmalate synthase (558 aa).

The 274-residue stretch at 30-303 (PIWCSVDLRD…DPGIDCSDIN (274 aa)) folds into the Pyruvate carboxyltransferase domain. Positions 39, 242, 244, and 278 each coordinate Mg(2+). The regulatory domain stretch occupies residues 437–558 (QPGARLKFLD…ANRIVGRKAR (122 aa)).

The protein belongs to the alpha-IPM synthase/homocitrate synthase family. LeuA type 2 subfamily. As to quaternary structure, homodimer. The cofactor is Mg(2+).

It is found in the cytoplasm. It catalyses the reaction 3-methyl-2-oxobutanoate + acetyl-CoA + H2O = (2S)-2-isopropylmalate + CoA + H(+). Its pathway is amino-acid biosynthesis; L-leucine biosynthesis; L-leucine from 3-methyl-2-oxobutanoate: step 1/4. In terms of biological role, catalyzes the condensation of the acetyl group of acetyl-CoA with 3-methyl-2-oxobutanoate (2-ketoisovalerate) to form 3-carboxy-3-hydroxy-4-methylpentanoate (2-isopropylmalate). In Mesorhizobium japonicum (strain LMG 29417 / CECT 9101 / MAFF 303099) (Mesorhizobium loti (strain MAFF 303099)), this protein is 2-isopropylmalate synthase.